The following is a 386-amino-acid chain: Cytochrome b (386 aa).

The next 4 helical transmembrane spans lie at 32 to 52 (FGSL…TLAM), 76 to 98 (WMIR…LHIG), 113 to 133 (PWSI…LGYV), and 179 to 199 (FFSL…MHLL). The heme b site is built by His-82 and His-96. Heme b is bound by residues His-183 and His-197. His-202 contacts a ubiquinone. 4 helical membrane-spanning segments follow: residues 225–245 (YTFK…LFLF), 289–309 (LGGV…PLLD), 321–341 (LMKF…WCGS), and 348–368 (FITL…IIVP).

The protein belongs to the cytochrome b family. As to quaternary structure, fungal cytochrome b-c1 complex contains 10 subunits; 3 respiratory subunits, 2 core proteins and 5 low-molecular weight proteins. Cytochrome b-c1 complex is a homodimer. Heme b is required as a cofactor.

The protein localises to the mitochondrion inner membrane. Functionally, component of the ubiquinol-cytochrome c reductase complex (complex III or cytochrome b-c1 complex) that is part of the mitochondrial respiratory chain. The b-c1 complex mediates electron transfer from ubiquinol to cytochrome c. Contributes to the generation of a proton gradient across the mitochondrial membrane that is then used for ATP synthesis. The polypeptide is Cytochrome b (cob) (Rhizopus oryzae (Mucormycosis agent)).